The primary structure comprises 336 residues: Tetraacyldisaccharide 4'-kinase (336 aa).

ATP is bound at residue 60 to 67 (TAGGNGKT).

Belongs to the LpxK family.

It catalyses the reaction a lipid A disaccharide + ATP = a lipid IVA + ADP + H(+). Its pathway is glycolipid biosynthesis; lipid IV(A) biosynthesis; lipid IV(A) from (3R)-3-hydroxytetradecanoyl-[acyl-carrier-protein] and UDP-N-acetyl-alpha-D-glucosamine: step 6/6. Its function is as follows. Transfers the gamma-phosphate of ATP to the 4'-position of a tetraacyldisaccharide 1-phosphate intermediate (termed DS-1-P) to form tetraacyldisaccharide 1,4'-bis-phosphate (lipid IVA). This Vibrio cholerae serotype O1 (strain ATCC 39315 / El Tor Inaba N16961) protein is Tetraacyldisaccharide 4'-kinase.